We begin with the raw amino-acid sequence, 409 residues long: Phospholipase ABHD3 (409 aa).

A helical; Signal-anchor for type II membrane protein transmembrane segment spans residues 26-46 (GFFGSGVGLSLILGFSVAYAF). The AB hydrolase-1 domain maps to 140 to 233 (PTILLLPGLT…MLLLNYLGKI (94 aa)). Active-site charge relay system residues include Ser220, Asp346, and His375.

The protein belongs to the AB hydrolase superfamily. AB hydrolase 4 family.

Its subcellular location is the membrane. It catalyses the reaction a 1,2-diacyl-sn-glycero-3-phosphocholine + H2O = a 1-acyl-sn-glycero-3-phosphocholine + a fatty acid + H(+). The catalysed reaction is a 1,2-diacyl-sn-glycero-3-phosphocholine + H2O = a 2-acyl-sn-glycero-3-phosphocholine + a fatty acid + H(+). It carries out the reaction 1-tetradecanoyl-2-(9Z,12Z-octadecadienoyl)-sn-glycero-3-phosphocholine + H2O = 2-(9Z,12Z-octadecadienoyl)-sn-glycero-3-phosphocholine + tetradecanoate + H(+). The enzyme catalyses 1-tetradecanoyl-2-(9Z,12Z-octadecadienoyl)-sn-glycero-3-phosphocholine + H2O = 1-tetradecanoyl-sn-glycero-3-phosphocholine + (9Z,12Z)-octadecadienoate + H(+). It catalyses the reaction 1-tetradecanoyl-2-(5Z,8Z,11Z,14Z-eicosatetraenoyl)-sn-glycero-3-phosphocholine + H2O = 2-(5Z,8Z,11Z,14Z)-eicosatetraenoyl-sn-glycero-3-phosphocholine + tetradecanoate + H(+). The catalysed reaction is 1-tetradecanoyl-2-(4Z,7Z,10Z,13Z,16Z,19Z-docosahexaenoyl)-sn-glycero-3-phosphocholine + H2O = 2-(4Z,7Z,10Z,13Z,16Z,19Z-docosahexaenoyl)-sn-glycero-3-phosphocholine + tetradecanoate + H(+). It carries out the reaction 1,2-ditetradecanoyl-sn-glycero-3-phosphocholine + H2O = 2-tetradecanoyl-sn-glycero-3-phosphocholine + tetradecanoate + H(+). The enzyme catalyses 1-octadecanoyl-2-acetyl-sn-glycero-3-phosphocholine + H2O = 1-octadecanoyl-sn-glycero-3-phosphocholine + acetate + H(+). It catalyses the reaction 1,2-ditetradecanoyl-sn-glycero-3-phosphocholine + H2O = 1-tetradecanoyl-sn-glycero-3-phosphocholine + tetradecanoate + H(+). The catalysed reaction is 1-octadecanoyl-2-pentanoyl-sn-glycero-3-phosphocholine + H2O = pentanoate + 1-octadecanoyl-sn-glycero-3-phosphocholine + H(+). It carries out the reaction 1-octadecanoyl-2-hexanoyl-sn-glycero-3-phosphocholine + H2O = hexanoate + 1-octadecanoyl-sn-glycero-3-phosphocholine + H(+). The enzyme catalyses 1-octadecanoyl-2-octanoyl-sn-glycero-3-phosphocholine + H2O = 1-octadecanoyl-sn-glycero-3-phosphocholine + octanoate + H(+). It catalyses the reaction 1-octadecanoyl-2-nonanoyl-sn-glycero-3-phosphocholine + H2O = nonanoate + 1-octadecanoyl-sn-glycero-3-phosphocholine + H(+). The catalysed reaction is 1-O-hexadecyl-2-nonadioyl-sn-glycero-3-phosphocholine + H2O = nonanedioate + 1-O-hexadecyl-sn-glycero-3-phosphocholine + H(+). It carries out the reaction 1-hexadecanoyl-2-nonadioyl-sn-glycero-3-phosphocholine + H2O = nonanedioate + 1-hexadecanoyl-sn-glycero-3-phosphocholine + H(+). The enzyme catalyses 1-hexadecanoyl-2-(9-oxononanoyl)-sn-glycero-3-phosphocholine + H2O = 9-oxononanoate + 1-hexadecanoyl-sn-glycero-3-phosphocholine + H(+). It catalyses the reaction 1-hexadecanoyl-2-(5-oxopentanoyl)-sn-glycero-3-phosphocholine + H2O = 5-oxopentanoate + 1-hexadecanoyl-sn-glycero-3-phosphocholine + H(+). The catalysed reaction is 1-hexadecanoyl-2-glutaroyl-sn-glycero-3-phosphocholine + H2O = glutarate + 1-hexadecanoyl-sn-glycero-3-phosphocholine + H(+). It carries out the reaction 1-O-hexadecyl-2-acetyl-sn-glycero-3-phosphocholine + H2O = 1-O-hexadecyl-sn-glycero-3-phosphocholine + acetate + H(+). Phospholipase that may play a role in phospholipids remodeling. May selectively cleave myristate (C14)-containing phosphatidylcholines through its predominant phospholipase 1 activity, cleaving preferentially acyl groups in sn1 position. In parallel, may have a minor phospholipase 2 activity acting on acyl groups in position sn2. In addition to (C14)-containing phosphatidylcholines, may also act on other medium-chain-containing and oxidatively truncated phospholipids. The polypeptide is Phospholipase ABHD3 (Homo sapiens (Human)).